The chain runs to 641 residues: 1-deoxy-D-xylulose-5-phosphate synthase (641 aa).

Thiamine diphosphate contacts are provided by residues His71 and 112-114 (SHA). Asp144 lines the Mg(2+) pocket. Thiamine diphosphate contacts are provided by residues 145 to 146 (GA), Asn173, Tyr284, and Glu365. Asn173 lines the Mg(2+) pocket.

It belongs to the transketolase family. DXPS subfamily. In terms of assembly, homodimer. Mg(2+) is required as a cofactor. It depends on thiamine diphosphate as a cofactor.

It carries out the reaction D-glyceraldehyde 3-phosphate + pyruvate + H(+) = 1-deoxy-D-xylulose 5-phosphate + CO2. It functions in the pathway metabolic intermediate biosynthesis; 1-deoxy-D-xylulose 5-phosphate biosynthesis; 1-deoxy-D-xylulose 5-phosphate from D-glyceraldehyde 3-phosphate and pyruvate: step 1/1. In terms of biological role, catalyzes the acyloin condensation reaction between C atoms 2 and 3 of pyruvate and glyceraldehyde 3-phosphate to yield 1-deoxy-D-xylulose-5-phosphate (DXP). This chain is 1-deoxy-D-xylulose-5-phosphate synthase, found in Mycolicibacterium paratuberculosis (strain ATCC BAA-968 / K-10) (Mycobacterium paratuberculosis).